The sequence spans 827 residues: MEASLAVIQRPQAGASNTVYKSGPLFISSKGLGWTSWKKRWFILTRTSLVFFKNDPSALPQKGGEVNLTLGGIDLNSSGSVVVREDKKLLTVLFPDGRDGRAFTLKAETLDDLYEWKAALEQALAQAPNAALVIGQNGIFRTEANNTIEASFNSWRDQRPLKSSVVGRPILLALEEIDGSPSFLEKALQFLETYGTKVEGILRQSADVEEVERRVQEYEQGKTEFSPEEDPHVVGDCVKHVLRQLPSSPVPASCCTALLEAYKIDQNEARVNSLRSAIIETFPEPNRRLLLRMLKMMHTITSHSSENRMTSSAVAACMSPLLLRPLLAGECDLEGFDTLGDNSAQLLAAANAANNAQAIVTALLEDYGNMINDEGLGRCSTSTDSHIGDSGPENSSDEEEIVVKHPDLHTLDIEEGETDDDNDVLLSRKPSESSDYAGSDLYDYKGFGVEDSDAESPRDIHCSVESTDFSARVKKHIEEPIKDIEVSSVSPTENCYQSGREAIPSVTPSTPLTALRYTTSAEKPASKTTGSSTVNSKRSSSWGRGNGKKTPAKGSFDSSGNDELLIQRLEHMKDELRQRIAKEAKGNAALQASLERRKQALHERRLALEQDVGRLQEQLQAERDLRSALEVGLSISCGQFSSQAADSKTRAELEEIALAEADVARLKQKVAELHHQLSQQRQHHLSSLPDAQSHHQFLHNHNTQLKSFQQDFDSILAFVNHERNQRTDETSLRADWRNGRGNNRQVPGSPSLNAASLGIPMEEYSPVMDYGRHHHPPATSAALMELTTRLDFFKERRSQLMEQIQNLDLNYGSSSSSLHRSSSPPWN.

Positions 18-125 (TVYKSGPLFI…WKAALEQALA (108 aa)) constitute a PH domain. A Rho-GAP domain is found at 172-371 (LALEEIDGSP…ALLEDYGNMI (200 aa)). Disordered regions lie at residues 379 to 437 (CSTS…SDYA) and 517 to 561 (YTTS…SSGN). Basic and acidic residues predominate over residues 401–412 (IVVKHPDLHTLD). Over residues 413–423 (IEEGETDDDND) the composition is skewed to acidic residues. Positions 517 to 543 (YTTSAEKPASKTTGSSTVNSKRSSSWG) are enriched in polar residues. Residues 560-684 (GNDELLIQRL…HQLSQQRQHH (125 aa)) adopt a coiled-coil conformation.

Its function is as follows. Acts as a GTPase activator for the Rac-type GTPase by converting it to an inactive GDP-bound state. The chain is Rho GTPase-activating protein 6 (ROPGAP6) from Arabidopsis thaliana (Mouse-ear cress).